Reading from the N-terminus, the 572-residue chain is Dityrosine transporter 1 (572 aa).

Disordered regions lie at residues 1–28 (MGSE…STFH) and 49–95 (RANI…SPDT). Topologically, residues 1–110 (MGSEPFQKKN…YTYFSKDQRL (110 aa)) are cytoplasmic. Over residues 13–28 (LQINSQESGTTRSTFH) the composition is skewed to polar residues. A compositionally biased stretch (basic and acidic residues) spans 50–62 (ANIDHDVFHEHPD). Residues 83-95 (SSNSQSRDPSPDT) show a composition bias toward polar residues. The chain crosses the membrane as a helical span at residues 111-131 (IIFGIIIFIGFLGPMSGNIYI). Residues 132–149 (PALPLLQREYDVSATTIN) lie on the Extracellular side of the membrane. Residues 150-170 (ATVSVFMAVFSVGPLFWGALA) traverse the membrane as a helical segment. Residues 171–184 (DFGGRKFLYMVSLS) are Cytoplasmic-facing. The helical transmembrane segment at 185–205 (LMLIVNILLAAVPVNIAALFV) threads the bilayer. Residues 206–207 (LR) lie on the Extracellular side of the membrane. A helical transmembrane segment spans residues 208 to 228 (IFQAFASSSVISLGAGTVTDV). Residues 229 to 240 (VPPKHRGKAIAY) are Cytoplasmic-facing. A helical transmembrane segment spans residues 241 to 261 (FMMGPNMGPIIAPIVAGLILM). At 262 to 267 (KGNYWR) the chain is on the extracellular side. A helical membrane pass occupies residues 268–288 (WLFGFTSIMTGIALILVTALL). Residues 289 to 366 (PETLRCIVGN…TLYWKMIKCP (78 aa)) lie on the Cytoplasmic side of the membrane. The helical transmembrane segment at 367–387 (PIIITSVSTALLFSSYYAFSV) threads the bilayer. The Extracellular segment spans residues 388–398 (TFSYYLEHDYR). Residues 399-419 (FTMLEIGAAYVCPGVAMLLGS) traverse the membrane as a helical segment. Residues 420 to 446 (QSGGHLSDYLRSRWIKSHPKKKFPAEF) lie on the Cytoplasmic side of the membrane. A helical transmembrane segment spans residues 447–469 (RLLLNLIGILLTICGTIGYGWAI). The Extracellular portion of the chain corresponds to 470–472 (FFH). The chain crosses the membrane as a helical span at residues 473-493 (YHFVVLLVFSALTAFGMTWCS). Residues 494–520 (NTSMTYLTELFPKRAAGTVAVSSFFRN) lie on the Cytoplasmic side of the membrane. A helical transmembrane segment spans residues 521–541 (VGAAISSAIILQLCNAMGIGW). A topological domain (extracellular) is located at residue C542. Residues 543-563 (FTGLGLCSSISLIGILYLLIF) form a helical membrane-spanning segment. Residues 548–572 (LCSSISLIGILYLLIFQRKYTAKEF) are required for the localization to the prospore membrane. The Cytoplasmic portion of the chain corresponds to 564–572 (QRKYTAKEF).

This sequence belongs to the major facilitator superfamily. CAR1 family. Post-translationally, phosphorylated.

The protein localises to the prospore membrane. Functionally, prospore-specific dityrosine transporter responsible for translocation of dityrosine through the prospore membrane and required for the formation of the outermost layer of the spore. This chain is Dityrosine transporter 1 (DTR1), found in Saccharomyces cerevisiae (strain ATCC 204508 / S288c) (Baker's yeast).